The following is a 194-amino-acid chain: MSNFGRRTWDREEYAEQARSGYDDRSLKATLTPIELQALKSKYTNYDHLIKGSLKDLNKRKLTANTESLSSFKRGKKFGFYCDICNLTFKDTLQYIDHLNHKVHAIKFENLFDEPLIIDIRDNDDVPQEEFELCYHNLIKDFVEVRSMETQSKRKRLLDTDVEKAKKVATKPSIESESKVSQMMGFSNFATSKK.

The C2H2-type zinc-finger motif lies at 80-104; it reads FYCDICNLTFKDTLQYIDHLNHKVH.

Component of the U4/U6-U5 tri-snRNP complex composed of the U4, U6 and U5 snRNAs and at least PRP3, PRP4, PRP6, PRP8, PRP18, PRP31, PRP38, SNU13, SNU23, SNU66, SNU114, SPP381, SMB1, SMD1, SMD2, SMD3, SMX2, SMX3, LSM2, LSM3, LSM4, LSM5, LSM6, LSM7, LSM8, BRR2 and DIB1.

It is found in the nucleus. Its function is as follows. Participates in pre-mRNA splicing. Part of the U4/U5/U6 tri-snRNP complex, one of the building blocks of the spliceosome. The chain is 23 kDa U4/U6.U5 small nuclear ribonucleoprotein component (SNU23) from Saccharomyces cerevisiae (strain ATCC 204508 / S288c) (Baker's yeast).